Here is an 81-residue protein sequence, read N- to C-terminus: Cytotoxin 4a (81 aa).

The N-terminal stretch at methionine 1–threonine 21 is a signal peptide. 4 disulfides stabilise this stretch: cysteine 24/cysteine 42, cysteine 35/cysteine 59, cysteine 63/cysteine 74, and cysteine 75/cysteine 80.

It belongs to the three-finger toxin family. Short-chain subfamily. Type IA cytotoxin sub-subfamily. In terms of assembly, monomer in solution; Homodimer and oligomer in the presence of negatively charged lipids forming a pore with a size ranging between 20 and 30 Angstroms. As to expression, expressed by the venom gland.

It is found in the secreted. Its subcellular location is the target cell membrane. In terms of biological role, shows cytolytic activity on many different cells by forming pore in lipid membranes. In vivo, increases heart rate or kills the animal by cardiac arrest. In addition, it binds to heparin with high affinity, interacts with Kv channel-interacting protein 1 (KCNIP1) in a calcium-independent manner, and binds to integrin alpha-V/beta-3 (ITGAV/ITGB3) with moderate affinity. This is Cytotoxin 4a from Naja sputatrix (Malayan spitting cobra).